The primary structure comprises 807 residues: FAD-linked oxidoreductase pytB (807 aa).

An N-terminal signal peptide occupies residues 1-18 (MRFLGIAAVATFSTVVSA). N-linked (GlcNAc...) asparagine glycans are attached at residues N45, N106, N120, N242, N295, N351, N419, and N699. The FAD-binding PCMH-type domain occupies 60 to 231 (FDELPVLLAY…VEFTLSLTSI (172 aa)).

This sequence belongs to the oxygen-dependent FAD-linked oxidoreductase family. The cofactor is FAD.

It functions in the pathway secondary metabolite biosynthesis. Functionally, FAD-linked oxidoreductase; part of the gene cluster that mediates the biosynthesis of pyranterreones, a family of antioxidative compounds. The first step of pyranonigrins biosynthesis is performed by the hybrid PKS-NRPS synthetase pytA that condenses 4 malonyl-CoA units ato the acetyl starter unit by the modular PKS of pytA. The acyl chain is then connected to an L-serine through the amide bond by the modular NRPS of pytA. A tetramic acid is formed and released from the PKS-NRPS pytA to give pyranterreone 5 with the help of the thioesterase pytI. Pyranterreone 5 could be methylated by pytC to afford pyranterreone 6. Both pyranterreones 5 and 6 are subsequently oxidized by the FAD-linked oxidoreductase pytB and the cytochrome P450 monooxygenase pytD to form the fused gamma-pyrone core, resulting in pyranterreones 7 and 11, respectively. The hydroxy group at C-8 of pyranterreones 7 and 11 are dehydrated by the aspartyl protease pytH to form a delta-7 double bond to give pyranterreones 3 and 1, 2 accordingly. The exo-methylene of pyranterreone 3 could be reduced into a pendant methyl by reductase pytE to provide pyranterreone 4, also known as cordylactam. Pyranterreone 4 can be reconverted to pyranterreone 3 through pytB-catalyzed dehydrogenation or further oxidized to pyranterreones 9 and 10. The chain is FAD-linked oxidoreductase pytB from Aspergillus terreus (strain NIH 2624 / FGSC A1156).